Reading from the N-terminus, the 627-residue chain is Sister chromatid cohesion 1 protein 1 (627 aa).

Disordered regions lie at residues 211-294 (GDDE…TATS), 395-416 (MHNH…NLDS), and 461-510 (GDDV…VAEE). Composition is skewed to basic and acidic residues over residues 254–263 (EQQENRRDGF), 272–282 (IPDKEEHDRPQ), and 395–408 (MHNH…ERSD). Residues 467-487 (MPSTPSARGAASINNIEISSK) show a composition bias toward polar residues.

Belongs to the rad21 family. As to quaternary structure, component of the cohesin complex. Isoform 2 is expressed at low levels in buds, leaves and roots, whereas expression of isoform 1 is confined to buds.

Its subcellular location is the nucleus. Involved in chromosome condensation, pairing and segregation during meiosis. Responsible for cohesion between replicated sister chromatids. The chain is Sister chromatid cohesion 1 protein 1 (SYN1) from Arabidopsis thaliana (Mouse-ear cress).